A 167-amino-acid polypeptide reads, in one-letter code: Transcription factor E (167 aa).

One can recognise an HTH TFE/IIEalpha-type domain in the interval 8–90 (NDKVIRGYLI…LWHLDFSDVE (83 aa)).

This sequence belongs to the TFE family. Monomer. Interaction with RNA polymerase subunits RpoF and RpoE is necessary for Tfe stimulatory transcription activity. Able to interact with Tbp and RNA polymerase in the absence of DNA promoter. Interacts both with the preinitiation and elongation complexes.

In terms of biological role, transcription factor that plays a role in the activation of archaeal genes transcribed by RNA polymerase. Facilitates transcription initiation by enhancing TATA-box recognition by TATA-box-binding protein (Tbp), and transcription factor B (Tfb) and RNA polymerase recruitment. Not absolutely required for transcription in vitro, but particularly important in cases where Tbp or Tfb function is not optimal. It dynamically alters the nucleic acid-binding properties of RNA polymerases by stabilizing the initiation complex and destabilizing elongation complexes. Seems to translocate with the RNA polymerase following initiation and acts by binding to the non template strand of the transcription bubble in elongation complexes. The protein is Transcription factor E of Methanosarcina acetivorans (strain ATCC 35395 / DSM 2834 / JCM 12185 / C2A).